Here is a 276-residue protein sequence, read N- to C-terminus: RRP15-like protein (276 aa).

Disordered regions lie at residues 1–132 and 201–276; these read MALL…QLRV and KRAK…DGEE. 2 stretches are compositionally biased toward basic and acidic residues: residues 75 to 95 and 226 to 245; these read FQKD…KADV and KGSS…DFMT. Residues 254-276 are compositionally biased toward acidic residues; sequence EEDDDEEGHNDEADDSDYDDGEE. A Phosphoserine modification is found at S269. Position 271 is a phosphotyrosine (Y271).

It belongs to the RRP15 family.

The sequence is that of RRP15-like protein from Drosophila melanogaster (Fruit fly).